We begin with the raw amino-acid sequence, 755 residues long: Metabotropic glutamate receptor-like protein B (755 aa).

Residues 1–23 (MKNLISIILLILIFFNYSKFVKS) form the signal peptide. N-linked (GlcNAc...) asparagine glycans are attached at residues asparagine 16, asparagine 183, and asparagine 273. Residues 24–385 (KNCKIAVLLS…VDYSSSMKLG (362 aa)) are Extracellular-facing. A helical transmembrane segment spans residues 386–406 (ITITSSICIFLCIISIIIVLV). Residues 407–417 (FRTARIIKSAS) lie on the Cytoplasmic side of the membrane. A helical membrane pass occupies residues 418–438 (PAFLFLILMGCILIFIGCIIF). At 439–455 (SQSPNEGTCRARVWLLS) the chain is on the extracellular side. The chain crosses the membrane as a helical span at residues 456-476 (IGYTIFLGSLLVKNWRIWLLF). Over 477 to 492 (DNPKLKKRSITNWKLY) the chain is Cytoplasmic. Residues 493–513 (PWVAGILAADVLILAFWQGLG) traverse the membrane as a helical segment. The Extracellular segment spans residues 514–541 (NIRSESRIGIDSLTKYQYTNVCSSNDQG). A helical membrane pass occupies residues 542–562 (SIALYILLVFHGIKLLVACFI). Over 563–578 (SFKIKVVDIDEFNESK) the chain is Cytoplasmic. Residues 579–599 (PIASSVYIITFCLFIVIPLMV) form a helical membrane-spanning segment. The Extracellular segment spans residues 600-607 (SPQSVTSQ). A helical transmembrane segment spans residues 608-628 (VTTICVCAIVTTLISIILLFG). Residues 629-755 (SKFYKMITQG…GEVEIDSNNL (127 aa)) are Cytoplasmic-facing. Disordered regions lie at residues 656-676 (QSLE…EENG) and 691-729 (FSSD…NIEE). The span at 694–710 (DTEDDENETQQIDEEKD) shows a compositional bias: acidic residues.

In the N-terminal section; belongs to the BMP lipoprotein family. It in the C-terminal section; belongs to the G-protein coupled receptor 3 family. GABA-B receptor subfamily.

The protein resides in the membrane. This chain is Metabotropic glutamate receptor-like protein B (grlB), found in Dictyostelium discoideum (Social amoeba).